Consider the following 469-residue polypeptide: MEESNRSSTVLFDKYNIGRLLGTGNFAKVYHGTEISTGDDVAIKVIKKDHVFKRRGMMEQIEREIAVMRLLRHPNVVELREVMATKKKIFFVMEYVNGGELFEMIDRDGKLPEDLARKYFQQLISAVDFCHSRGVFHRDIKPENLLLDGEGDLKVTDFGLSALMMPEGLGGRRGSSDDLLHTRCGTPAYVAPEVLRNKGYDGAMADIWSCGIVLYALLAGFLPFIDENVMTLYTKIFKAECEFPPWFSLESKELLSRLLVPDPEQRISMSEIKMIPWFRKNFTPSVAFSIDETIPSPPEPPTKKKKKDLNEKEDDGASPRSFNAFQFITSMSSGFDLSNLFEIKRKPKRMFTSKFPAKSVKERLETAAREMDMRVKHVKDCKMKLQRRTEGRKGRLSVTAEVFEVAPEVSVVEFCKTSGDTLEYYLFCEDDVRPALKDIVWSWQGDDDEDDVTTNDNVDTNDNKINNVS.

Positions tyrosine 15–phenylalanine 278 constitute a Protein kinase domain. Residues leucine 21–valine 29 and lysine 44 each bind ATP. The active-site Proton acceptor is the aspartate 139. Positions aspartate 157 to glutamate 193 are activation loop. Serine 161 is subject to Phosphoserine. Threonine 182 carries the phosphothreonine modification. The segment at isoleucine 290 to arginine 320 is disordered. Residues alanine 317–glutamate 342 form the NAF domain. The segment at lysine 346–lysine 376 is PPI. Positions aspartate 447 to serine 469 are disordered. Positions threonine 454–serine 469 are enriched in low complexity.

This sequence belongs to the protein kinase superfamily. CAMK Ser/Thr protein kinase family. SNF1 subfamily. Part of a K(+)-channel calcium-sensing kinase/phosphatase complex composed by a calcium sensor CBL (CBL1, CBL2, CBL3 or CBL9), a kinase CIPK (CIPK6, CIPK16 or CIPK23), a phosphatase PP2C (AIP1) and a K(+)-channel (AKT1). Interacts with AKT1, CBL1, CBL2, CBL3 and CBL9. It depends on Mn(2+) as a cofactor.

It carries out the reaction L-seryl-[protein] + ATP = O-phospho-L-seryl-[protein] + ADP + H(+). It catalyses the reaction L-threonyl-[protein] + ATP = O-phospho-L-threonyl-[protein] + ADP + H(+). Its function is as follows. CIPK serine-threonine protein kinases interact with CBL proteins. Binding of a CBL protein to the regulatory NAF domain of CIPK protein lead to the activation of the kinase in a calcium-dependent manner. Downstream of CBL1, CBL2, CBL3 and CBL9, regulates by phosphorylation the K(+) conductance and uptake of AKT1. The polypeptide is CBL-interacting serine/threonine-protein kinase 16 (CIPK16) (Arabidopsis thaliana (Mouse-ear cress)).